Here is a 317-residue protein sequence, read N- to C-terminus: Melanocyte-stimulating hormone receptor (317 aa).

Topologically, residues 1-37 are extracellular; it reads MPMQGAQRRLLGSLNSTPTATPNLGLAANHTGAPCLE. N-linked (GlcNAc...) asparagine glycosylation occurs at Asn29. A helical transmembrane segment spans residues 38–63; sequence VSIPDGLFLSLGLVSLVENVLVVAAI. Over 64-72 the chain is Cytoplasmic; it reads AKNRNLHSP. A helical transmembrane segment spans residues 73-93; that stretch reads MYCFICCLALSDLLVSGSNML. At 94–118 the chain is on the extracellular side; sequence EMAVILLLEAGALATRASVVQQLQN. A helical membrane pass occupies residues 119-140; that stretch reads TIDVLTCSSMLCSLCFLGAIAV. The Cytoplasmic segment spans residues 141–163; the sequence is DRYVSIFYALRYHSIVTLPRARR. Residues 164–183 form a helical membrane-spanning segment; that stretch reads AIAAIWVASVLSSTLFIAYC. The Extracellular segment spans residues 184-191; the sequence is DHAAVLLC. The chain crosses the membrane as a helical span at residues 192–211; it reads LVVFFLAMLVLMAVLYVHML. Residues 212 to 240 lie on the Cytoplasmic side of the membrane; it reads ARACQHAQGITRLHKRQLPAHQGFGLRGA. A helical transmembrane segment spans residues 241 to 266; the sequence is ATLTILLGIFFLCWGPFFLHLMLVVL. Topologically, residues 267 to 279 are extracellular; it reads CPQHLTCSCIFKN. The chain crosses the membrane as a helical span at residues 280 to 300; that stretch reads FKVFLTLIICNTIIDPLIYAF. Topologically, residues 301–317 are cytoplasmic; that stretch reads RSQELCRTLREVLLCSW. Residue Cys315 is the site of S-palmitoyl cysteine attachment.

The protein belongs to the G-protein coupled receptor 1 family. Interacts with MGRN1, but does not undergo MGRN1-mediated ubiquitination; this interaction competes with GNAS-binding and thus inhibits agonist-induced cAMP production. Interacts with OPN3; the interaction results in a decrease in MC1R-mediated cAMP signaling and ultimately a decrease in melanin production in melanocytes.

It is found in the cell membrane. Receptor for MSH (alpha, beta and gamma) and ACTH. The activity of this receptor is mediated by G proteins which activate adenylate cyclase. Mediates melanogenesis, the production of eumelanin (black/brown) and phaeomelanin (red/yellow), via regulation of cAMP signaling in melanocytes. The chain is Melanocyte-stimulating hormone receptor (MC1R) from Alouatta pigra (Guatemalan howler monkey).